The sequence spans 156 residues: Putative pre-16S rRNA nuclease (156 aa).

Belongs to the YqgF nuclease family.

It localises to the cytoplasm. Its function is as follows. Could be a nuclease involved in processing of the 5'-end of pre-16S rRNA. The polypeptide is Putative pre-16S rRNA nuclease (Albidiferax ferrireducens (strain ATCC BAA-621 / DSM 15236 / T118) (Rhodoferax ferrireducens)).